A 222-amino-acid polypeptide reads, in one-letter code: Peptide methionine sulfoxide reductase MsrA (222 aa).

Cys-54 is a catalytic residue.

The protein belongs to the MsrA Met sulfoxide reductase family.

The enzyme catalyses L-methionyl-[protein] + [thioredoxin]-disulfide + H2O = L-methionyl-(S)-S-oxide-[protein] + [thioredoxin]-dithiol. It catalyses the reaction [thioredoxin]-disulfide + L-methionine + H2O = L-methionine (S)-S-oxide + [thioredoxin]-dithiol. Functionally, has an important function as a repair enzyme for proteins that have been inactivated by oxidation. Catalyzes the reversible oxidation-reduction of methionine sulfoxide in proteins to methionine. In Methylococcus capsulatus (strain ATCC 33009 / NCIMB 11132 / Bath), this protein is Peptide methionine sulfoxide reductase MsrA.